The following is a 123-amino-acid chain: Small ribosomal subunit protein bS6 (123 aa).

The tract at residues 102 to 123 is disordered; the sequence is MLKQKEERAPRREAEAKEFAAE. The segment covering 104 to 123 has biased composition (basic and acidic residues); sequence KQKEERAPRREAEAKEFAAE.

The protein belongs to the bacterial ribosomal protein bS6 family.

Functionally, binds together with bS18 to 16S ribosomal RNA. In Vibrio vulnificus (strain CMCP6), this protein is Small ribosomal subunit protein bS6.